The sequence spans 199 residues: uncharacterized protein (199 aa).

The stretch at 72–116 (EIYSEIENEESDIEEMSEEMKAFFAKTQEHRQKLKEQRAAEKRKE) forms a coiled coil. Residues 98 to 117 (TQEHRQKLKEQRAAEKRKEG) show a composition bias toward basic and acidic residues. The disordered stretch occupies residues 98–127 (TQEHRQKLKEQRAAEKRKEGQSSSKSQEEY).

This is an uncharacterized protein from Caenorhabditis elegans.